The primary structure comprises 464 residues: Protein FAM90A24 (464 aa).

3 disordered regions span residues 1 to 42 (MMAR…DPRL), 69 to 389 (VPAT…HDGA), and 415 to 437 (HSPE…SEAP). Basic and acidic residues-rich tracts occupy residues 74 to 89 (GKKE…KPRG) and 97 to 114 (NKDK…DPQR). The span at 180–197 (LASLSPLRKASLSSSSSL) shows a compositional bias: low complexity.

Belongs to the FAM90 family.

In Homo sapiens (Human), this protein is Protein FAM90A24.